A 419-amino-acid chain; its full sequence is UPF0329 protein ECU07_1890/ECU10_0010 (419 aa).

Residues 136–165 (RQRKREEETERSVKELVGDEEKAKSKEEKA) show a composition bias toward basic and acidic residues. The interval 136-222 (RQRKREEETE…KGGKKKSKGG (87 aa)) is disordered. Over residues 213-222 (KGGKKKSKGG) the composition is skewed to basic residues.

The protein belongs to the UPF0329 family.

In Encephalitozoon cuniculi (strain GB-M1) (Microsporidian parasite), this protein is UPF0329 protein ECU07_1890/ECU10_0010.